A 662-amino-acid polypeptide reads, in one-letter code: DNA topoisomerase 4 subunit B (662 aa).

Residues Y20, N60, D87, 129–135, and K359 contribute to the ATP site; that span reads GLHGVGI. Positions 439-553 constitute a Toprim domain; it reads TELFIVEGDS…EGHLYLAKPP (115 aa). Residues E445, D518, and D520 each contribute to the Mg(2+) site.

Belongs to the type II topoisomerase family. ParE type 1 subfamily. As to quaternary structure, heterotetramer composed of ParC and ParE. The cofactor is Mg(2+). It depends on Mn(2+) as a cofactor. Requires Ca(2+) as cofactor.

The enzyme catalyses ATP-dependent breakage, passage and rejoining of double-stranded DNA.. Its function is as follows. Topoisomerase IV is essential for chromosome segregation. It relaxes supercoiled DNA. Performs the decatenation events required during the replication of a circular DNA molecule. This Rickettsia prowazekii (strain Madrid E) protein is DNA topoisomerase 4 subunit B.